Here is a 261-residue protein sequence, read N- to C-terminus: Type II restriction enzyme Sau96I (261 aa).

In terms of assembly, monomer.

It carries out the reaction Endonucleolytic cleavage of DNA to give specific double-stranded fragments with terminal 5'-phosphates.. Its function is as follows. A P subtype restriction enzyme that recognizes the double-stranded sequence 5'-GGNCC-3' and cleaves after G-1. The sequence is that of Type II restriction enzyme Sau96I from Staphylococcus aureus.